Consider the following 104-residue polypeptide: Large ribosomal subunit protein uL24 (104 aa).

It belongs to the universal ribosomal protein uL24 family. As to quaternary structure, part of the 50S ribosomal subunit.

Its function is as follows. One of two assembly initiator proteins, it binds directly to the 5'-end of the 23S rRNA, where it nucleates assembly of the 50S subunit. In terms of biological role, one of the proteins that surrounds the polypeptide exit tunnel on the outside of the subunit. The polypeptide is Large ribosomal subunit protein uL24 (Shewanella sediminis (strain HAW-EB3)).